The chain runs to 227 residues: UPF0173 metal-dependent hydrolase BCE_4747 (227 aa).

Belongs to the UPF0173 family.

The sequence is that of UPF0173 metal-dependent hydrolase BCE_4747 from Bacillus cereus (strain ATCC 10987 / NRS 248).